The primary structure comprises 201 residues: Transgelin (201 aa).

Alanine 2 is subject to N-acetylalanine. Residues 24–137 enclose the Calponin-homology (CH) domain; the sequence is EELEERLVEW…RTLMALGSLA (114 aa). Serine 166 is modified (phosphoserine). At lysine 172 the chain carries N6-acetyllysine. The Calponin-like repeat unit spans residues 175-200; the sequence is IGLQMGSNRGASQAGMTGYGRPRQII. At serine 181 the chain carries Phosphoserine. Arginine 183 is modified (omega-N-methylarginine).

Belongs to the calponin family.

It localises to the cytoplasm. Functionally, actin cross-linking/gelling protein. The chain is Transgelin (Tagln) from Mus musculus (Mouse).